A 744-amino-acid chain; its full sequence is Cullin-1 (744 aa).

The Cullin neddylation domain maps to 674 to 736 (DRRYAIDASI…RDYLERDKDN (63 aa)).

Belongs to the cullin family. As to quaternary structure, part of a SCF (SKP1-CUL1-F-box protein) E3 ubiquitin-protein ligase complex. Is able to form the SCF complex together with SKP1 and the rice black streaked dwarf virus RBSDV protein P7-2. Interacts with D3. In terms of processing, neddylated (rubylated). Deneddylation occurs upon interaction with the COP9 signalosome (CSN) complex. Expressed in dry seeds and coleoptiles.

In terms of biological role, involved in ubiquitination and subsequent proteasomal degradation of target proteins. The sequence is that of Cullin-1 from Oryza sativa subsp. japonica (Rice).